Reading from the N-terminus, the 330-residue chain is Putative acetyltransferase ORF330 (330 aa).

Transmembrane regions (helical) follow at residues 29–49 (GFAS…LPLS), 50–70 (IFRP…FLLL), 90–110 (IYPL…YYFH), 118–138 (LFLH…SYVF), 163–183 (FLLA…IVTL), 190–210 (LLYF…IAYI), 225–245 (ISFL…NEFL), 252–272 (VVVY…PPKV), 273–293 (LSKV…WHLL), and 297–317 (LLGV…EFPL).

It is found in the host membrane. The chain is Putative acetyltransferase ORF330 from Acidianus convivator (ATV).